The sequence spans 59 residues: UPF0434 protein LHK_01103 (59 aa).

This sequence belongs to the UPF0434 family.

The chain is UPF0434 protein LHK_01103 from Laribacter hongkongensis (strain HLHK9).